Reading from the N-terminus, the 228-residue chain is PKHD-type hydroxylase Rmet_3078 (228 aa).

The region spanning 80–180 (IVYPPMFNRY…RVGCFFWIQS (101 aa)) is the Fe2OG dioxygenase domain. Residues His98, Asp100, and His161 each coordinate Fe cation. Arg171 provides a ligand contact to 2-oxoglutarate.

Requires Fe(2+) as cofactor. The cofactor is L-ascorbate.

The sequence is that of PKHD-type hydroxylase Rmet_3078 from Cupriavidus metallidurans (strain ATCC 43123 / DSM 2839 / NBRC 102507 / CH34) (Ralstonia metallidurans).